Consider the following 268-residue polypeptide: CCAAT/enhancer-binding protein delta (268 aa).

Disordered regions lie at residues M1–P50, L98–G132, and A152–L223. S2 carries the N-acetylserine modification. Residue K120 forms a Glycyl lysine isopeptide (Lys-Gly) (interchain with G-Cter in SUMO) linkage. A compositionally biased stretch (pro residues) spans P155 to A173. Positions V177 to N201 are enriched in basic and acidic residues. A bZIP domain is found at S191–L254. A basic motif region spans residues R195–K222. The leucine-zipper stretch occupies residues L226–L254.

Belongs to the bZIP family. C/EBP subfamily. In terms of assembly, binds DNA as a homodimer and as a heterodimer. Can form stable heterodimers with CEBPA, CEBPB and CEBPE. Directly interacts with SPI1/PU.1; this interaction does not affect DNA-binding properties of each partner. Interacts with PRDM16. Ubiquitously expressed.

The protein localises to the nucleus. In terms of biological role, transcription activator that recognizes two different DNA motifs: the CCAAT homology common to many promoters and the enhanced core homology common to many enhancers. Important transcription factor regulating the expression of genes involved in immune and inflammatory responses. Transcriptional activator that enhances IL6 transcription alone and as heterodimer with CEBPB. This chain is CCAAT/enhancer-binding protein delta (Cebpd), found in Rattus norvegicus (Rat).